Consider the following 419-residue polypeptide: MQQSGQKGTRNTLQHAIGPVLVIAQFFGVLPVAGVWPSCRPERVRFRWISLSLLAALILFVFSIVDCALSSKVVFDHGLKIYTIGSLSFSVICIFCFGVFLLLSRRWPYIIRRTAECEQIFLEPEYDCSYGRGYSSRLRLWGVCMLVAALCEHSTYVGSALYNNHLAIVECKLDANFWQNYFQRERQQLFLIMHFTAWWIPFIEWTTLSMTFVWNFVDIFLILICRGMQMRFQQMHWRIRQHVRQQMPNEFWQRIRCDLLDLSDLLGIYDKELSGLIVLSCAHNMYFVCVQIYHSFQSKGNYADELYFWFCLSYVIIRVLNMMFAASSIPQEAKEISYTLYEIPTEFWCVELRRLNEIFLSDHFALSGKGYFLLTRRLIFAMAATLMVYELVLINQMAGSEVQKSFCEGGVGSSKSIFS.

Residues 1-15 lie on the Cytoplasmic side of the membrane; sequence MQQSGQKGTRNTLQH. The chain crosses the membrane as a helical span at residues 16–36; that stretch reads AIGPVLVIAQFFGVLPVAGVW. The Extracellular portion of the chain corresponds to 37–48; sequence PSCRPERVRFRW. The chain crosses the membrane as a helical span at residues 49–69; sequence ISLSLLAALILFVFSIVDCAL. Topologically, residues 70–82 are cytoplasmic; that stretch reads SSKVVFDHGLKIY. Residues 83-103 traverse the membrane as a helical segment; sequence TIGSLSFSVICIFCFGVFLLL. Residues 104–139 are Extracellular-facing; it reads SRRWPYIIRRTAECEQIFLEPEYDCSYGRGYSSRLR. The helical transmembrane segment at 140-160 threads the bilayer; that stretch reads LWGVCMLVAALCEHSTYVGSA. The Cytoplasmic portion of the chain corresponds to 161-204; the sequence is LYNNHLAIVECKLDANFWQNYFQRERQQLFLIMHFTAWWIPFIE. A helical membrane pass occupies residues 205–225; the sequence is WTTLSMTFVWNFVDIFLILIC. Over 226–305 the chain is Extracellular; that stretch reads RGMQMRFQQM…FQSKGNYADE (80 aa). Residues 306 to 326 traverse the membrane as a helical segment; it reads LYFWFCLSYVIIRVLNMMFAA. Over 327–377 the chain is Cytoplasmic; that stretch reads SSIPQEAKEISYTLYEIPTEFWCVELRRLNEIFLSDHFALSGKGYFLLTRR. Residues 378–398 form a helical membrane-spanning segment; it reads LIFAMAATLMVYELVLINQMA. The Extracellular segment spans residues 399 to 419; that stretch reads GSEVQKSFCEGGVGSSKSIFS.

This sequence belongs to the insect chemoreceptor superfamily. Gustatory receptor (GR) family. Gr5a subfamily. Expressed in Gr5a-expressing sugar-sensing cells.

The protein localises to the cell membrane. Functionally, one of the few identified sugar gustatory receptors identified so far and which promotes the starvation-induced increase of feeding motivation. The sequence is that of Gustatory receptor for sugar taste 64c (Gr64c) from Drosophila melanogaster (Fruit fly).